Here is a 608-residue protein sequence, read N- to C-terminus: RAS guanyl-releasing protein 2 (608 aa).

The 123-residue stretch at 4–126 folds into the N-terminal Ras-GEF domain; sequence TLDLDKGCTV…SLIDIENVPT (123 aa). A phosphoserine mark is found at Ser116, Ser117, and Ser147. Positions 154–387 constitute a Ras-GEF domain; sequence EPLELAAHLT…YQLSLQREPR (234 aa). Positions 382-407 are disordered; sequence LQREPRSKSSPTSPTTCTPPPRPPVL. 2 consecutive EF-hand domains span residues 426–461 and 463–490; these read HIEK…FPYL and AFGD…SSSM. 10 residues coordinate Ca(2+): Asp439, Asp441, Asp443, His445, Glu450, Asp468, Asn470, Asp472, Cys474, and Glu479. The Phorbol-ester/DAG-type zinc finger occupies 498–548; the sequence is VHNFHESNSLRPVACRHCKALILGIYKQGLKCRACGVNCHKQCKDRLSVEC. Phosphoserine occurs at positions 554 and 575. The segment at 556-591 is disordered; it reads SLEGSAPSPSPTHTHHRAFSFSLPRPGRRGSRPPEI.

Belongs to the RASGRP family. Forms a signaling complex with RAP1 and BRAF. Interacts with RAP1. Interacts with F-actin.

Its subcellular location is the cytoplasm. The protein localises to the cytosol. It is found in the cell membrane. It localises to the synapse. The protein resides in the synaptosome. Its subcellular location is the cell projection. The protein localises to the ruffle membrane. In terms of biological role, functions as a calcium- and DAG-regulated nucleotide exchange factor specifically activating Rap through the exchange of bound GDP for GTP. May also activate other GTPases such as RRAS, RRAS2, NRAS, KRAS but not HRAS. Functions in aggregation of platelets and adhesion of T-lymphocytes and neutrophils probably through inside-out integrin activation. May function in the muscarinic acetylcholine receptor M1/CHRM1 signaling pathway. In Bos taurus (Bovine), this protein is RAS guanyl-releasing protein 2 (RASGRP2).